Reading from the N-terminus, the 285-residue chain is Secreted LysM effector slp2 (285 aa).

The N-terminal stretch at 1 to 16 (MLPITVVTLFAALAAA) is a signal peptide. Residues 75–143 (GDAAKAGDAA…KGGDAAKGGN (69 aa)) are disordered. The span at 85 to 116 (KGGDAKGGDAKGGDAKGGDAKGGKGGDAKGGK) shows a compositional bias: basic and acidic residues. Over residues 117-139 (GGDAAKGGKGGDAAKGGKGGDAA) the composition is skewed to gly residues. LysM domains lie at 157-201 (VEHK…VLKI) and 237-281 (FTRV…TINL).

The protein belongs to the secreted LysM effector family.

Its function is as follows. Might have a role in sequestration of chitin oligosaccharides (breakdown products of fungal cell walls that are released during invasion and act as triggers of host immunity) to dampen host defense. This Pyricularia oryzae (strain 70-15 / ATCC MYA-4617 / FGSC 8958) (Rice blast fungus) protein is Secreted LysM effector slp2.